A 261-amino-acid polypeptide reads, in one-letter code: Claudin-18 (261 aa).

The Cytoplasmic portion of the chain corresponds to Met1–Cys6. The chain crosses the membrane as a helical span at residues Gln7–Met27. Topologically, residues Asp28–Arg80 are extracellular. A helical membrane pass occupies residues Ala81–Leu101. Residues Lys102–Gly122 lie on the Cytoplasmic side of the membrane. The helical transmembrane segment at Ile123 to Leu143 threads the bilayer. At Val144 to Ala174 the chain is on the extracellular side. Residues Leu175–Ala195 traverse the membrane as a helical segment. The required for role in regulation of RANKL-induced osteoclast differentiation stretch occupies residues Ala195 to Val261. The Cytoplasmic portion of the chain corresponds to Cys196 to Val261. Ser214 carries the post-translational modification Phosphoserine. The tract at residues Ser228–Val261 is disordered. Residues Lys239–Asp249 are compositionally biased toward basic and acidic residues.

Belongs to the claudin family. Interacts with TJP2/ZO-2. Interacts with TJP1/ZO-1. Interacts with YAP1 (phosphorylated); the interaction sequesters YAP1 away from the nucleus and thereby restricts transcription of YAP1 target genes. Interacts with CLDN19.

It localises to the cell junction. It is found in the tight junction. The protein resides in the cell membrane. Functionally, involved in alveolar fluid homeostasis via regulation of alveolar epithelial tight junction composition and therefore ion transport and solute permeability, potentially via downstream regulation of the actin cytoskeleton organization and beta-2-adrenergic signaling. Required for lung alveolarization and maintenance of the paracellular alveolar epithelial barrier. Acts to maintain epithelial progenitor cell proliferation and organ size, via regulation of YAP1 localization away from the nucleus and thereby restriction of YAP1 target gene transcription. Acts as a negative regulator of RANKL-induced osteoclast differentiation, potentially via relocation of TJP2/ZO-2 away from the nucleus, subsequently involved in bone resorption in response to calcium deficiency. Mediates the osteoprotective effects of estrogen, potentially via acting downstream of estrogen signaling independently of RANKL signaling pathways. The protein is Claudin-18 (CLDN18) of Bos taurus (Bovine).